A 145-amino-acid polypeptide reads, in one-letter code: MELFKSIVAVIGIIATIYFLIKKAETRTVLIGVGLIMSILTLNPMGALDAFAKSMTSGGLIMAICSSMGFAYVMKYTQCDTHLVHLLTKPLSGLKFFLIPIATIITFFINIAIPSAAGCAAAVGATLIPVLKSAGVRPATAGQLF.

The next 4 membrane-spanning stretches (helical) occupy residues 1–21 (MELFKSIVAVIGIIATIYFLI), 28–48 (TVLIGVGLIMSILTLNPMGAL), 54–74 (SMTSGGLIMAICSSMGFAYVM), and 96–116 (FFLIPIATIITFFINIAIPSA).

This sequence belongs to the DcuC/DcuD transporter (TC 2.A.61) family.

Its subcellular location is the cell membrane. This is an uncharacterized protein from Haemophilus influenzae (strain ATCC 51907 / DSM 11121 / KW20 / Rd).